The following is a 425-amino-acid chain: GTPase Obg (425 aa).

An Obg domain is found at 1 to 158 (MFIDKAKIYV…REIILELKLL (158 aa)). The region spanning 159–331 (ADVGLVGFPN…LMAEVSKTLA (173 aa)) is the OBG-type G domain. Residues 165-172 (GFPNVGKS), 190-194 (FTTLK), 212-215 (DIPG), 282-285 (NKSD), and 312-314 (SAA) contribute to the GTP site. 2 residues coordinate Mg(2+): S172 and T192. In terms of domain architecture, OCT spans 345–425 (LFIPEEKRFT…LNDFEFEFVI (81 aa)).

This sequence belongs to the TRAFAC class OBG-HflX-like GTPase superfamily. OBG GTPase family. In terms of assembly, monomer. Mg(2+) is required as a cofactor.

It is found in the cytoplasm. Functionally, an essential GTPase which binds GTP, GDP and possibly (p)ppGpp with moderate affinity, with high nucleotide exchange rates and a fairly low GTP hydrolysis rate. Plays a role in control of the cell cycle, stress response, ribosome biogenesis and in those bacteria that undergo differentiation, in morphogenesis control. This Clostridium tetani (strain Massachusetts / E88) protein is GTPase Obg.